Reading from the N-terminus, the 288-residue chain is Bifunctional protein FolD (288 aa).

Residues 166–168 and I232 each bind NADP(+); that span reads GAS.

The protein belongs to the tetrahydrofolate dehydrogenase/cyclohydrolase family. Homodimer.

It catalyses the reaction (6R)-5,10-methylene-5,6,7,8-tetrahydrofolate + NADP(+) = (6R)-5,10-methenyltetrahydrofolate + NADPH. It carries out the reaction (6R)-5,10-methenyltetrahydrofolate + H2O = (6R)-10-formyltetrahydrofolate + H(+). Its pathway is one-carbon metabolism; tetrahydrofolate interconversion. Catalyzes the oxidation of 5,10-methylenetetrahydrofolate to 5,10-methenyltetrahydrofolate and then the hydrolysis of 5,10-methenyltetrahydrofolate to 10-formyltetrahydrofolate. This Erwinia tasmaniensis (strain DSM 17950 / CFBP 7177 / CIP 109463 / NCPPB 4357 / Et1/99) protein is Bifunctional protein FolD.